Reading from the N-terminus, the 138-residue chain is MYQQKYFEKPVYYLQRNDFDDNGNLIVPELRNKKVIIMIQANYCGHCTNAKGDYYKAAKYIKELEKNGGTSYKNKVVFATIQADGDEEGEKELNQILDKIKPTFVGFPDYVLYVNGKRIEDDGPPGRNFNNIVNYVMG.

Residues 3-138 enclose the Thioredoxin domain; it reads QQKYFEKPVY…FNNIVNYVMG (136 aa). Active-site nucleophile residues include Cys-44 and Cys-47. A disulfide bond links Cys-44 and Cys-47.

The protein belongs to the thioredoxin family.

Functionally, participates in various redox reactions through the reversible oxidation of its active center dithiol to a disulfide and catalyzes dithiol-disulfide exchange reactions. The polypeptide is Putative thioredoxin-like protein 453L (Acheta domesticus (House cricket)).